A 360-amino-acid chain; its full sequence is E3 ubiquitin-protein ligase RNF146 (360 aa).

The RING-type zinc-finger motif lies at 37 to 75 (CAICLQTCVHPVSLPCKHVFCYLCVKGASWLGKRCALCR). Glycyl lysine isopeptide (Lys-Gly) (interchain with G-Cter in ubiquitin) cross-links involve residues lysine 85 and lysine 95. Positions 92–168 (EELKAASRGN…EHGRRRKIKR (77 aa)) constitute a WWE domain. A glycoprotein-binding residues include tyrosine 108, arginine 111, and tryptophan 115. Lysine 131 is covalently cross-linked (Glycyl lysine isopeptide (Lys-Gly) (interchain with G-Cter in ubiquitin)). The a glycoprotein site is built by tyrosine 145, glutamine 154, arginine 164, and lysine 176. Lysine 176 participates in a covalent cross-link: Glycyl lysine isopeptide (Lys-Gly) (interchain with G-Cter in ubiquitin). The interval 259–360 (ERSHRGEGEE…PDGQCTVTEV (102 aa)) is disordered. The segment covering 284–294 (SIEETESDASS) has biased composition (acidic residues). Serine 290 and serine 294 each carry phosphoserine. Residues 295–305 (DSENVSSAVVA) are compositionally biased toward low complexity. A compositionally biased stretch (polar residues) spans 307-333 (HSLTQQRLLVSNANQTVSDRSDQSGTD).

Can form homooligomers. Interacts with PARsylated AXIN1, AXIN2, BLZF1, CASC3, H1-2, IPO7, LIG3, NCL, PARP1, XRCC1, XRCC5 and XRCC6. Interacts with DDB1, DHX15, IQGAP1, LRPPRC, PARP2, PRKDC, RUVBL2, TNKS1 and TNKS2. Binding often leads to interactor ubiquitination, in the presence of the appropriate E1 and E2 enzymes, and proteasomal degradation. Post-translationally, ubiquitinated; autoubiquitinated. Autoubiquitination is enhanced upon poly(ADP-ribose)-binding.

The protein localises to the cytoplasm. Its subcellular location is the cytosol. It is found in the nucleus. It carries out the reaction S-ubiquitinyl-[E2 ubiquitin-conjugating enzyme]-L-cysteine + [acceptor protein]-L-lysine = [E2 ubiquitin-conjugating enzyme]-L-cysteine + N(6)-ubiquitinyl-[acceptor protein]-L-lysine.. The protein operates within protein modification; protein ubiquitination. E3 ubiquitin-protein ligase that specifically binds poly-ADP-ribosylated (PARsylated) proteins and mediates their ubiquitination and subsequent degradation. May regulate many important biological processes, such as cell survival and DNA damage response. Acts as an activator of the Wnt signaling pathway by mediating the ubiquitination of PARsylated AXIN1 and AXIN2, 2 key components of the beta-catenin destruction complex. Acts in cooperation with tankyrase proteins (TNKS and TNKS2), which mediate PARsylation of target proteins AXIN1, AXIN2, BLZF1, CASC3, TNKS and TNKS2. Recognizes and binds tankyrase-dependent PARsylated proteins via its WWE domain and mediates their ubiquitination, leading to their degradation. Different ubiquitin linkage types have been observed: TNKS2 undergoes ubiquitination at 'Lys-48' and 'Lys-63', while AXIN1 is only ubiquitinated at 'Lys-48'. May regulate TNKS and TNKS2 subcellular location, preventing aggregation at a centrosomal location. Neuroprotective protein. Protects the brain against N-methyl-D-aspartate (NMDA) receptor-mediated glutamate excitotoxicity and ischemia, by interfering with PAR-induced cell death, called parthanatos. Prevents nuclear translocation of AIFM1 in a PAR-binding dependent manner. Does not affect PARP1 activation. Protects against cell death induced by DNA damaging agents, such as N-methyl-N-nitro-N-nitrosoguanidine (MNNG) and rescues cells from G1 arrest. Promotes cell survival after gamma-irradiation. Facilitates DNA repair. The protein is E3 ubiquitin-protein ligase RNF146 (RNF146) of Macaca fascicularis (Crab-eating macaque).